An 802-amino-acid polypeptide reads, in one-letter code: Threonine--tRNA ligase 2, cytoplasmic (802 aa).

A2 is modified (N-acetylalanine). Coiled coils occupy residues 3–23 (AEALAAEAVASRLERQEEDIR) and 76–96 (AEERSRQATLESAELEAAQEA). Residues 86 to 98 (ESAELEAAQEAGA) are compositionally biased toward low complexity. Positions 86-123 (ESAELEAAQEAGAQPPPSQSQDKDMKKKKMKESEADSE) are disordered. Over residues 106 to 123 (QDKDMKKKKMKESEADSE) the composition is skewed to basic and acidic residues. A TGS domain is found at 157–222 (DTSNIITVRV…EGDSSLELLT (66 aa)). S453 carries the phosphoserine modification. Residues 786–792 (KLKNLRK) carry the Nuclear localization signal motif.

It belongs to the class-II aminoacyl-tRNA synthetase family. In terms of assembly, may be a component of the multisynthetase complex (MSC), a large multi-subunit complex which contains at least eight different aminoacyl-tRNA synthetases plus three auxillary subunits AIMP1, AIMP2 and EEF1E1. Interacts with the MSC components EPRS1, AIMP1, AIMP2 and KARS1.

It is found in the cytoplasm. It localises to the nucleus. It catalyses the reaction tRNA(Thr) + L-threonine + ATP = L-threonyl-tRNA(Thr) + AMP + diphosphate + H(+). Its function is as follows. Catalyzes the attachment of threonine to tRNA(Thr) in a two-step reaction: threonine is first activated by ATP to form Thr-AMP and then transferred to the acceptor end of tRNA(Thr). Also edits incorrectly charged tRNA(Thr) via its editing domain, at the post-transfer stage. This chain is Threonine--tRNA ligase 2, cytoplasmic, found in Homo sapiens (Human).